A 130-amino-acid polypeptide reads, in one-letter code: Small ribosomal subunit protein uS9 (130 aa).

This sequence belongs to the universal ribosomal protein uS9 family.

The polypeptide is Small ribosomal subunit protein uS9 (Xylella fastidiosa (strain 9a5c)).